Here is a 371-residue protein sequence, read N- to C-terminus: Transcription factor bHLH77 (371 aa).

Disordered regions lie at residues 1–25 (MNMD…FGNG), 65–206 (SGGI…SLAE), and 352–371 (QSNN…KLEP). The span at 85–96 (SQPTTQESNKSS) shows a compositional bias: polar residues. A compositionally biased stretch (low complexity) spans 128 to 142 (SPASSSLTASNSKVS). The span at 165 to 190 (GVEKCDSKGDNKDDAKPPEAPKDYIH) shows a compositional bias: basic and acidic residues. One can recognise a bHLH domain in the interval 197–247 (QATDSHSLAERARREKISERMTLLQDLVPGCNRITGKAVMLDEIINYVQSL).

Homodimer. Interacts with IBH1. As to expression, expressed constitutively in roots, leaves, stems, and flowers.

The protein resides in the nucleus. The sequence is that of Transcription factor bHLH77 (BHLH77) from Arabidopsis thaliana (Mouse-ear cress).